The primary structure comprises 385 residues: Outer membrane protein P2 (385 aa).

The first 20 residues, Met1–Ala20, serve as a signal peptide directing secretion.

It belongs to the Gram-negative porin family. Homotrimer.

Its subcellular location is the cell outer membrane. Forms pores that allow passive diffusion of small molecules across the outer membrane. The sequence is that of Outer membrane protein P2 (ompP2) from Haemophilus influenzae.